We begin with the raw amino-acid sequence, 285 residues long: ATP synthase gamma chain (285 aa).

It belongs to the ATPase gamma chain family. F-type ATPases have 2 components, CF(1) - the catalytic core - and CF(0) - the membrane proton channel. CF(1) has five subunits: alpha(3), beta(3), gamma(1), delta(1), epsilon(1). CF(0) has three main subunits: a, b and c.

The protein localises to the cell membrane. Its function is as follows. Produces ATP from ADP in the presence of a proton gradient across the membrane. The gamma chain is believed to be important in regulating ATPase activity and the flow of protons through the CF(0) complex. This chain is ATP synthase gamma chain, found in Dehalococcoides mccartyi (strain ATCC BAA-2100 / JCM 16839 / KCTC 5957 / BAV1).